The sequence spans 204 residues: MSIHPKLNNKQRRIGLTGGIASGKSTIAKYIKEYIDIPILDADQYSKDLIKPKSNCYKKVVAYFGPQIVDQHSSENEINRALLKKIIFENSIHRKWIQNLLHPLIKEKMIEKCNQFDKNKILLLVIPLLFEAKFGDICTEIWLVKCPKEVQKKRLMKRNIISENEAQKIINLQLNFEDKSKFADVILDNSDNKQLWKNTIKKLV.

Positions 13–204 (RIGLTGGIAS…LWKNTIKKLV (192 aa)) constitute a DPCK domain. ATP is bound at residue 21–26 (ASGKST).

This sequence belongs to the CoaE family.

The protein resides in the cytoplasm. The enzyme catalyses 3'-dephospho-CoA + ATP = ADP + CoA + H(+). The protein operates within cofactor biosynthesis; coenzyme A biosynthesis; CoA from (R)-pantothenate: step 5/5. In terms of biological role, catalyzes the phosphorylation of the 3'-hydroxyl group of dephosphocoenzyme A to form coenzyme A. This Prochlorococcus marinus subsp. pastoris (strain CCMP1986 / NIES-2087 / MED4) protein is Dephospho-CoA kinase.